The following is a 281-amino-acid chain: MKRIVVVSGLSGAGKTTAMGFLEDLGYFCVDNVPGNILEELLKLFMSSDLEKMAMAIDVRSEHLGDPISTVERIKEKTNALVIFLEASTEELLRRYALTRRRHPLQKDGLGLEDAIEKEKEILSHIKEIADVVIDTTRMNTHQLRETLAHFLVNQAGGTSVRIMSFGFKHGIPMDADFVFDARFLPNPHYVPELSSKTGLDSEVEAYFKNYPVVEEFIEKIFEVLKVAIEEYQRTGRRIITVGIGCTGGKHRSVYITHRLKEMLEREGFTVIEKHRDIEKV.

Residue 9 to 16 (GLSGAGKT) coordinates ATP. 58–61 (DVRS) lines the GTP pocket.

This sequence belongs to the RapZ-like family.

Displays ATPase and GTPase activities. This Thermotoga petrophila (strain ATCC BAA-488 / DSM 13995 / JCM 10881 / RKU-1) protein is Nucleotide-binding protein Tpet_1006.